The sequence spans 528 residues: Probable rhamnogalacturonate lyase A (528 aa).

The signal sequence occupies residues 1-20 (MLSKATLLLFLPSWARVTYA). N-linked (GlcNAc...) asparagine glycosylation occurs at Asn46. Cysteines 50 and 93 form a disulfide. N-linked (GlcNAc...) asparagine glycosylation is present at Asn148. Residues Cys184 and Cys193 are joined by a disulfide bond. N-linked (GlcNAc...) asparagine glycosylation is present at Asn351.

It belongs to the polysaccharide lyase 4 family.

It is found in the secreted. It carries out the reaction Endotype eliminative cleavage of L-alpha-rhamnopyranosyl-(1-&gt;4)-alpha-D-galactopyranosyluronic acid bonds of rhamnogalacturonan I domains in ramified hairy regions of pectin leaving L-rhamnopyranose at the reducing end and 4-deoxy-4,5-unsaturated D-galactopyranosyluronic acid at the non-reducing end.. Its function is as follows. Pectinolytic enzymes consist of four classes of enzymes: pectin lyase, polygalacturonase, pectin methylesterase and rhamnogalacturonase. Degrades the rhamnogalacturonan I (RG-I) backbone of pectin. This is Probable rhamnogalacturonate lyase A (rglA) from Aspergillus fumigatus (strain CBS 144.89 / FGSC A1163 / CEA10) (Neosartorya fumigata).